We begin with the raw amino-acid sequence, 206 residues long: MFYLIKKLPKFILFSLYLYAFSSISDSSGILSERLNLINSFYSTVRQKVTSSSGDIVQESKGEIWIKKPNLFKSILFSPYENIASSDGNTLWLYDSETNQVTINWIKNIISDSPLYLIIKNNKNSWENFNIKNINDTFYIYSKKLNSSFRKITIIIDKKGILKNLIILSNTNYKTYYTFNIKKTIISSDFNFNFKIPKGAYIDDQR.

A signal peptide spans 1–20; the sequence is MFYLIKKLPKFILFSLYLYA.

The protein belongs to the LolA family. Monomer.

The protein resides in the periplasm. Participates in the translocation of lipoproteins from the inner membrane to the outer membrane. Only forms a complex with a lipoprotein if the residue after the N-terminal Cys is not an aspartate (The Asp acts as a targeting signal to indicate that the lipoprotein should stay in the inner membrane). In Wigglesworthia glossinidia brevipalpis, this protein is Outer-membrane lipoprotein carrier protein.